We begin with the raw amino-acid sequence, 371 residues long: Protein OSB2, chloroplastic (371 aa).

The transit peptide at 1-20 directs the protein to the chloroplast; it reads MSLISKSLARIECSPFFYPR. The disordered stretch occupies residues 45-64; the sequence is GKTGNGERKQRAKAPAKTPE. One can recognise an SSB domain in the interval 97–195; sequence VANWVNLIGF…VLVQNLNFIQ (99 aa). PDF region stretches follow at residues 237–289 and 312–360; these read WNHL…PKLE and WKDL…PKLP.

In terms of tissue distribution, expressed in the floral abscission zone.

Its subcellular location is the plastid. It localises to the chloroplast. In terms of biological role, binds preferentially single-stranded DNA. Does not bind to RNA. The sequence is that of Protein OSB2, chloroplastic (OSB2) from Arabidopsis thaliana (Mouse-ear cress).